The following is a 343-amino-acid chain: Nuclear hormone receptor family member nhr-167 (343 aa).

Residues 5–81 constitute a DNA-binding region (nuclear receptor); that stretch reads HQKCAVCGRF…VGMTLPSYLL (77 aa). 2 consecutive NR C4-type zinc fingers follow at residues 8 to 28 and 45 to 64; these read CAVC…CNSC and CFRG…CTSC. The NR LBD domain occupies 101 to 339; the sequence is THNKRMDSLF…KKLVKDGIEA (239 aa).

It belongs to the nuclear hormone receptor family.

The protein localises to the nucleus. Its function is as follows. Orphan nuclear receptor. This is Nuclear hormone receptor family member nhr-167 (nhr-167) from Caenorhabditis elegans.